A 225-amino-acid polypeptide reads, in one-letter code: NAD(P)H-hydrate epimerase (225 aa).

The YjeF N-terminal domain occupies 9–209 (MQTIDNYTVE…DIGLLTPQDF (201 aa)). Position 57 to 61 (57 to 61 (NNGAD)) interacts with (6S)-NADPHX. K(+) is bound by residues Asn58 and Asp119. Residues 123 to 129 (GTGLNNL) and Asp152 each bind (6S)-NADPHX. Residue Thr155 coordinates K(+).

This sequence belongs to the NnrE/AIBP family. It depends on K(+) as a cofactor.

The enzyme catalyses (6R)-NADHX = (6S)-NADHX. It catalyses the reaction (6R)-NADPHX = (6S)-NADPHX. Functionally, catalyzes the epimerization of the S- and R-forms of NAD(P)HX, a damaged form of NAD(P)H that is a result of enzymatic or heat-dependent hydration. This is a prerequisite for the S-specific NAD(P)H-hydrate dehydratase to allow the repair of both epimers of NAD(P)HX. This chain is NAD(P)H-hydrate epimerase, found in Leuconostoc sp. (strain C2).